The chain runs to 155 residues: Endoribonuclease YbeY (155 aa).

Residues histidine 113, histidine 117, and histidine 123 each contribute to the Zn(2+) site.

Belongs to the endoribonuclease YbeY family. The cofactor is Zn(2+).

The protein resides in the cytoplasm. In terms of biological role, single strand-specific metallo-endoribonuclease involved in late-stage 70S ribosome quality control and in maturation of the 3' terminus of the 16S rRNA. This chain is Endoribonuclease YbeY, found in Ureaplasma parvum serovar 3 (strain ATCC 27815 / 27 / NCTC 11736).